Reading from the N-terminus, the 183-residue chain is Microfibrillar-associated protein 2 (183 aa).

A signal peptide (or 19) is located at residues 1-17 (MRAAYLFLLFLPAGLLA). Residue Gln-18 is modified to Pyrrolidone carboxylic acid. Sulfotyrosine occurs at positions 47, 48, and 50. The disordered stretch occupies residues 58–94 (SEEQFQFQSQQQVQQEVIPAPTPEPGNAELEPTEPGP). A compositionally biased stretch (low complexity) spans 60-74 (EQFQFQSQQQVQQEV). The region spanning 153 to 183 (CRDKFSKCGVMASSGLCQSVAASCARSCGSC) is the ShKT domain. Disulfide bonds link Cys-153–Cys-183, Cys-160–Cys-176, and Cys-169–Cys-180.

It belongs to the MFAP family. As to quaternary structure, forms a ternary complex with BGN and ELN. Interacts with FBN1 (via N-terminal domain) and FBN2. In terms of processing, forms intermolecular disulfide bonds either with other MAGP-1 molecules or with other components of the microfibrils. May form transglutaminase cross-links. Post-translationally, O-glycosylated.

The protein resides in the secreted. Its subcellular location is the extracellular space. It localises to the extracellular matrix. Functionally, component of the elastin-associated microfibrils. This Homo sapiens (Human) protein is Microfibrillar-associated protein 2 (MFAP2).